The chain runs to 227 residues: dTTP/UTP pyrophosphatase (227 aa).

Positions 1 to 21 (MNDLPRAELPGSGSPNPESLI) are disordered. D87 functions as the Proton acceptor in the catalytic mechanism.

The protein belongs to the Maf family. YhdE subfamily. The cofactor is a divalent metal cation.

It localises to the cytoplasm. It catalyses the reaction dTTP + H2O = dTMP + diphosphate + H(+). It carries out the reaction UTP + H2O = UMP + diphosphate + H(+). Functionally, nucleoside triphosphate pyrophosphatase that hydrolyzes dTTP and UTP. May have a dual role in cell division arrest and in preventing the incorporation of modified nucleotides into cellular nucleic acids. The chain is dTTP/UTP pyrophosphatase from Rhodopirellula baltica (strain DSM 10527 / NCIMB 13988 / SH1).